The following is a 941-amino-acid chain: Isoleucine--tRNA ligase (941 aa).

The short motif at 58-68 is the 'HIGH' region element; the sequence is PYANGNIHLGH. Glu564 lines the L-isoleucyl-5'-AMP pocket. Residues 605-609 carry the 'KMSKS' region motif; sequence KMSKS. Lys608 provides a ligand contact to ATP. 4 residues coordinate Zn(2+): Cys904, Cys907, Cys924, and Cys927.

Belongs to the class-I aminoacyl-tRNA synthetase family. IleS type 1 subfamily. In terms of assembly, monomer. Zn(2+) is required as a cofactor.

It is found in the cytoplasm. The catalysed reaction is tRNA(Ile) + L-isoleucine + ATP = L-isoleucyl-tRNA(Ile) + AMP + diphosphate. Its function is as follows. Catalyzes the attachment of isoleucine to tRNA(Ile). As IleRS can inadvertently accommodate and process structurally similar amino acids such as valine, to avoid such errors it has two additional distinct tRNA(Ile)-dependent editing activities. One activity is designated as 'pretransfer' editing and involves the hydrolysis of activated Val-AMP. The other activity is designated 'posttransfer' editing and involves deacylation of mischarged Val-tRNA(Ile). In Hahella chejuensis (strain KCTC 2396), this protein is Isoleucine--tRNA ligase.